Reading from the N-terminus, the 363-residue chain is 3-isopropylmalate dehydrogenase (363 aa).

Residue 78–91 (GPKWEHLPPDQQPE) coordinates NAD(+). Substrate is bound by residues arginine 99, arginine 109, arginine 138, and aspartate 227. Residues aspartate 227, aspartate 251, and aspartate 255 each coordinate Mg(2+). Residue 285-297 (GSAPDIAGKNIAN) participates in NAD(+) binding.

The protein belongs to the isocitrate and isopropylmalate dehydrogenases family. LeuB type 1 subfamily. In terms of assembly, homodimer. Requires Mg(2+) as cofactor. Mn(2+) serves as cofactor.

The protein resides in the cytoplasm. It catalyses the reaction (2R,3S)-3-isopropylmalate + NAD(+) = 4-methyl-2-oxopentanoate + CO2 + NADH. The protein operates within amino-acid biosynthesis; L-leucine biosynthesis; L-leucine from 3-methyl-2-oxobutanoate: step 3/4. Its function is as follows. Catalyzes the oxidation of 3-carboxy-2-hydroxy-4-methylpentanoate (3-isopropylmalate) to 3-carboxy-4-methyl-2-oxopentanoate. The product decarboxylates to 4-methyl-2 oxopentanoate. The polypeptide is 3-isopropylmalate dehydrogenase (Shigella flexneri).